We begin with the raw amino-acid sequence, 319 residues long: NADH-quinone oxidoreductase subunit H 1 (319 aa).

Helical transmembrane passes span M1 to V21, I77 to G97, V107 to A127, L147 to L167, V179 to A199, L214 to E234, V238 to L258, I262 to L282, and F293 to V313.

It belongs to the complex I subunit 1 family. As to quaternary structure, NDH-1 is composed of 14 different subunits. Subunits NuoA, H, J, K, L, M, N constitute the membrane sector of the complex.

It is found in the cell inner membrane. The enzyme catalyses a quinone + NADH + 5 H(+)(in) = a quinol + NAD(+) + 4 H(+)(out). Functionally, NDH-1 shuttles electrons from NADH, via FMN and iron-sulfur (Fe-S) centers, to quinones in the respiratory chain. The immediate electron acceptor for the enzyme in this species is believed to be ubiquinone. Couples the redox reaction to proton translocation (for every two electrons transferred, four hydrogen ions are translocated across the cytoplasmic membrane), and thus conserves the redox energy in a proton gradient. This subunit may bind ubiquinone. This is NADH-quinone oxidoreductase subunit H 1 from Rhodopseudomonas palustris (strain HaA2).